We begin with the raw amino-acid sequence, 319 residues long: MENFPIINLEGLNGEGRKATMEKIKDACENWGFFELVSHGIPTEFLDTVERLTKEHYRQCLEQRFKELVASKGLEAVKTEVNDMDWESTFYLRHLPKSNISEVPDLEDQYRNVMKEFALKLEKLAEQLLDLLCENLGLEKGYLKKAFYGTNGPTFGTKVSNYPPCPNPELIKGLRAHTDAGGLILLFQDDKVSGLQLLKDGQWIDVPPMRHSIVINLGDQLEVITNGKYRSVEHRVIAQTDGTRMSIASFYNPGSDAVIYPAPTLVEKEAEEKNQVYPKFVFEDYMKLYAGLKFQPKEPRFEAMKAVETNISLVPIATA.

In terms of domain architecture, Fe2OG dioxygenase spans 153-253; it reads PTFGTKVSNY…RMSIASFYNP (101 aa). Fe cation-binding residues include His177, Asp179, and His234.

This sequence belongs to the iron/ascorbate-dependent oxidoreductase family. The cofactor is Fe cation.

The enzyme catalyses 1-aminocyclopropane-1-carboxylate + L-ascorbate + O2 = ethene + L-dehydroascorbate + hydrogen cyanide + CO2 + 2 H2O. It participates in alkene biosynthesis; ethylene biosynthesis via S-adenosyl-L-methionine; ethylene from S-adenosyl-L-methionine: step 2/2. In Prunus mume (Japanese apricot), this protein is 1-aminocyclopropane-1-carboxylate oxidase (ACO1).